The primary structure comprises 322 residues: tRNA-dihydrouridine synthase B (322 aa).

FMN-binding positions include 16–18 and glutamine 70; that span reads PMA. The active-site Proton donor is cysteine 100. FMN-binding positions include lysine 139, 200-202, and 224-225; these read NGD and GR.

Belongs to the Dus family. DusB subfamily. The cofactor is FMN.

The enzyme catalyses a 5,6-dihydrouridine in tRNA + NAD(+) = a uridine in tRNA + NADH + H(+). It catalyses the reaction a 5,6-dihydrouridine in tRNA + NADP(+) = a uridine in tRNA + NADPH + H(+). Its function is as follows. Catalyzes the synthesis of 5,6-dihydrouridine (D), a modified base found in the D-loop of most tRNAs, via the reduction of the C5-C6 double bond in target uridines. This is tRNA-dihydrouridine synthase B from Vibrio cholerae serotype O1 (strain ATCC 39315 / El Tor Inaba N16961).